We begin with the raw amino-acid sequence, 519 residues long: DDB1- and CUL4-associated factor 17 (519 aa).

The next 2 helical transmembrane spans lie at 186–206 (VLLYLAVFRVLPFSLVGILEI) and 222–242 (GILIVMYSSGLVRLYSFQAII).

Interacts with DDB1, CUL4A and CUL4B. As to expression, ubiquitously expressed in the embryo, with higher expression in brain, liver and skin tissues.

Its subcellular location is the membrane. The protein localises to the nucleus. The protein resides in the nucleolus. It participates in protein modification; protein ubiquitination. Its function is as follows. May function as a substrate receptor for CUL4-DDB1 E3 ubiquitin-protein ligase complex. The sequence is that of DDB1- and CUL4-associated factor 17 (Dcaf17) from Mus musculus (Mouse).